A 100-amino-acid chain; its full sequence is Aspartyl/glutamyl-tRNA(Asn/Gln) amidotransferase subunit C (100 aa).

It belongs to the GatC family. As to quaternary structure, heterotrimer of A, B and C subunits.

The catalysed reaction is L-glutamyl-tRNA(Gln) + L-glutamine + ATP + H2O = L-glutaminyl-tRNA(Gln) + L-glutamate + ADP + phosphate + H(+). It catalyses the reaction L-aspartyl-tRNA(Asn) + L-glutamine + ATP + H2O = L-asparaginyl-tRNA(Asn) + L-glutamate + ADP + phosphate + 2 H(+). Allows the formation of correctly charged Asn-tRNA(Asn) or Gln-tRNA(Gln) through the transamidation of misacylated Asp-tRNA(Asn) or Glu-tRNA(Gln) in organisms which lack either or both of asparaginyl-tRNA or glutaminyl-tRNA synthetases. The reaction takes place in the presence of glutamine and ATP through an activated phospho-Asp-tRNA(Asn) or phospho-Glu-tRNA(Gln). This Streptococcus equi subsp. zooepidemicus (strain H70) protein is Aspartyl/glutamyl-tRNA(Asn/Gln) amidotransferase subunit C.